We begin with the raw amino-acid sequence, 234 residues long: Viral Fc-gamma receptor-like protein IR11 (234 aa).

Positions 1–23 (MQTYSTPLTLVIVTSLFLFTTQG) are cleaved as a signal peptide. Positions 24–122 (SSSNAVEPTK…VKDTGVYLLQ (99 aa)) constitute an Ig-like V-type domain. Residues 24 to 182 (SSSNAVEPTK…DLKRQWSGLS (159 aa)) are Extracellular-facing. 3 N-linked (GlcNAc...) asparagine; by host glycosylation sites follow: Asn57, Asn105, and Asn110. Residues 183–203 (LHCAWVSGMMIFVGALVICFL) form a helical membrane-spanning segment. Residues 204–234 (RSQRIGEQDAEHLRTDLDTEPLLLTVDGDLQ) lie on the Cytoplasmic side of the membrane.

Belongs to the RL11 family.

Its subcellular location is the membrane. This Homo sapiens (Human) protein is Viral Fc-gamma receptor-like protein IR11.